The chain runs to 210 residues: MGLTSWLFGGGKSPQEQLRAHQRSLGRAERELDRERTKLDQRERALIQEIKGSAKAGNTGAARIQARDLMRLRNSRKKMMNAKTQLQAISLRLQTMRTSEQMMQSMRGATRLLTGMNKSMNIPAMARITQQFERENEIMEQRQEMIDENMDDALEEDDEEEADELVNKVLDEIGVDLSQGLPDAATQIGTVPELKTEDNLQARLDELAKR.

The segment at 1 to 38 (MGLTSWLFGGGKSPQEQLRAHQRSLGRAERELDRERTK) is disordered. Positions 15–97 (QEQLRAHQRS…AISLRLQTMR (83 aa)) form a coiled coil. A compositionally biased stretch (basic and acidic residues) spans 26–38 (GRAERELDRERTK).

Belongs to the SNF7 family. As to quaternary structure, core component of the ESCRT-III complex (endosomal sorting required for transport complex III). ESCRT-III appears to be sequentially assembled as a flat lattice on the endosome membrane.

The protein localises to the cytoplasm. Its subcellular location is the endosome membrane. Functionally, required for the sorting and concentration of proteins resulting in the entry of these proteins into the invaginating vesicles of the multivesicular body (MVB). Acts a component of the ESCRT-III complex, which appears to be critical for late steps in MVB sorting, such as membrane invagination and final cargo sorting and recruitment of late-acting components of the sorting machinery. The MVB pathway requires the sequential function of ESCRT-O, -I,-II and -III complex assemblies. This chain is ESCRT-III complex subunit did4 (did4), found in Schizosaccharomyces pombe (strain 972 / ATCC 24843) (Fission yeast).